The following is a 146-amino-acid chain: MEILGFTVMGGGSPAWIEVPEKSKSAFWELMRRKVHRYVIFKIDDRREEIVVEKTGAPWESYDDFTASLPADAVYDLDFVSDDNCRKSKIFFISWSPSLSCIRAKTIYAVWRNQFRHELDGVHFEIQATDPDDMDLEVLRGRANRT.

Residues 14 to 144 (PAWIEVPEKS…DLEVLRGRAN (131 aa)) enclose the ADF-H domain.

This sequence belongs to the actin-binding proteins ADF family.

Actin-depolymerizing protein. Severs actin filaments (F-actin) and binds to actin monomers. This is Putative actin-depolymerizing factor 8 (ADF8) from Oryza sativa subsp. japonica (Rice).